The following is a 445-amino-acid chain: Rab GDP dissociation inhibitor beta (445 aa).

Met1 bears the N-acetylmethionine mark. Residue Lys57 is modified to N6-succinyllysine. Lys112 carries the post-translational modification N6-acetyllysine. Ser130 bears the Phosphoserine mark. Lys269 is modified (N6-acetyllysine). Position 382 is a phosphoserine (Ser382).

The protein belongs to the Rab GDI family. In terms of assembly, interacts with RHOH. Interacts with the GDP-bound inactive forms of RAB3A, RAB3B, RAB3C, RAB5A, RAB5B, RAB5C, RAB8A, RAB8B, RAB10, RAB12, RAB35, and RAB43; binds RAB3D to a lesser extent. Interacts with DZIP1; this interaction negatively regulates the interaction of GDI2 with GDP-bound RAB8A. In terms of tissue distribution, ubiquitously expressed.

It localises to the cytoplasm. It is found in the membrane. The protein resides in the golgi apparatus. The protein localises to the trans-Golgi network. Its function is as follows. GDP-dissociation inhibitor preventing the GDP to GTP exchange of most Rab proteins. By keeping these small GTPases in their inactive GDP-bound form regulates intracellular membrane trafficking. Negatively regulates protein transport to the cilium and ciliogenesis through the inhibition of RAB8A. This chain is Rab GDP dissociation inhibitor beta (Gdi2), found in Rattus norvegicus (Rat).